Reading from the N-terminus, the 694-residue chain is PTS system fructose-specific EIIABC component (694 aa).

The PTS EIIA type-2 domain occupies 4–149 (PLLSAELFFN…NGLINLIDSF (146 aa)). Catalysis depends on His68, which acts as the Tele-phosphohistidine intermediate; for EIIA activity. At His68 the chain carries Phosphohistidine; by HPr. Residues 179–275 (FVAVTACPTG…PQTVYDQVVK (97 aa)) enclose the PTS EIIB type-2 domain. Catalysis depends on Cys185, which acts as the Phosphocysteine intermediate; for EIIB activity. A Phosphocysteine; by EIIA modification is found at Cys185. The PTS EIIC type-2 domain occupies 310–687 (IYRAILSGVS…NLLVVRKKTK (378 aa)). The next 10 membrane-spanning stretches (helical) occupy residues 318–338 (VSYM…AFLI), 364–384 (GGLS…FALV), 390–410 (LPGF…IDIV), 422–442 (VSSG…LIIV), 461–481 (ILFI…VINI), 502–522 (LAPL…GGPV), 542–562 (VAMA…AIAA), 576–596 (AAYA…IPFV), 602–622 (IMLA…GAFA), and 655–675 (GVGL…GIII).

The protein resides in the cell membrane. It carries out the reaction D-fructose(out) + N(pros)-phospho-L-histidyl-[protein] = D-fructose 1-phosphate(in) + L-histidyl-[protein]. The phosphoenolpyruvate-dependent sugar phosphotransferase system (sugar PTS), a major carbohydrate active transport system, catalyzes the phosphorylation of incoming sugar substrates concomitantly with their translocation across the cell membrane. This system is involved in fructose transport. The protein is PTS system fructose-specific EIIABC component of Mycoplasma pneumoniae (strain ATCC 29342 / M129 / Subtype 1) (Mycoplasmoides pneumoniae).